The following is a 291-amino-acid chain: Bifunctional protein FolD (291 aa).

NADP(+) contacts are provided by residues 173–175 and Ser198; that span reads GRS.

Belongs to the tetrahydrofolate dehydrogenase/cyclohydrolase family. In terms of assembly, homodimer.

The catalysed reaction is (6R)-5,10-methylene-5,6,7,8-tetrahydrofolate + NADP(+) = (6R)-5,10-methenyltetrahydrofolate + NADPH. It carries out the reaction (6R)-5,10-methenyltetrahydrofolate + H2O = (6R)-10-formyltetrahydrofolate + H(+). Its pathway is one-carbon metabolism; tetrahydrofolate interconversion. In terms of biological role, catalyzes the oxidation of 5,10-methylenetetrahydrofolate to 5,10-methenyltetrahydrofolate and then the hydrolysis of 5,10-methenyltetrahydrofolate to 10-formyltetrahydrofolate. This Psychrobacter sp. (strain PRwf-1) protein is Bifunctional protein FolD.